A 262-amino-acid chain; its full sequence is MMPYISKNAVIIGRDRKFITDNVTVEEPLQISIENENRIYNVSVIMRTPVDDEALATGFLVNEGIIEPDKIIKVSKRSENNVCVSVESFNEDLLKNRNFYVNSSCGVCGKTDIENVFIKSHGIVRSQSRTDHSIILGLPDKMMKNQKIFSYTGGIHAAALFDLNGNMISISEDIGRHNAVDKTIGKMILKNVYRMEDSILQVSGRAGFEILQKASMFGVSIVSSVSAPSSLAIDVAETFNITLISFVRKNRMNIYSHPERIL.

C105 acts as the Cysteine persulfide intermediate in catalysis. 246 to 251 (FVRKNR) contacts Mo-bis(molybdopterin guanine dinucleotide).

It belongs to the FdhD family.

It is found in the cytoplasm. Functionally, required for formate dehydrogenase (FDH) activity. Acts as a sulfur carrier protein that transfers sulfur from IscS to the molybdenum cofactor prior to its insertion into FDH. This Picrophilus torridus (strain ATCC 700027 / DSM 9790 / JCM 10055 / NBRC 100828 / KAW 2/3) protein is Sulfur carrier protein FdhD.